The sequence spans 176 residues: Ribosome maturation factor RimP (176 aa).

The disordered stretch occupies residues 143-176 (LKPQTAKKKGRQEETEDMTLELDAVSRAVPEAEI).

The protein belongs to the RimP family.

The protein resides in the cytoplasm. In terms of biological role, required for maturation of 30S ribosomal subunits. The polypeptide is Ribosome maturation factor RimP (Chlorobium luteolum (strain DSM 273 / BCRC 81028 / 2530) (Pelodictyon luteolum)).